Reading from the N-terminus, the 336-residue chain is Glyceraldehyde-3-phosphate dehydrogenase (336 aa).

NAD(+)-binding positions include 12 to 13 (RI), Asp34, and Arg79. D-glyceraldehyde 3-phosphate contacts are provided by residues 150–152 (SCT), Thr181, 210–211 (TG), and Arg233. The active-site Nucleophile is the Cys151. An NAD(+)-binding site is contributed by Asn315.

Belongs to the glyceraldehyde-3-phosphate dehydrogenase family. As to quaternary structure, homotetramer.

The protein localises to the cytoplasm. The catalysed reaction is D-glyceraldehyde 3-phosphate + phosphate + NAD(+) = (2R)-3-phospho-glyceroyl phosphate + NADH + H(+). It participates in carbohydrate degradation; glycolysis; pyruvate from D-glyceraldehyde 3-phosphate: step 1/5. This is Glyceraldehyde-3-phosphate dehydrogenase (gpdA) from Aspergillus niger.